Consider the following 274-residue polypeptide: Non-heme haloperoxidase (274 aa).

Residues proline 22–histidine 254 form the AB hydrolase-1 domain. Residues serine 95, aspartate 225, and histidine 254 contribute to the active site.

It belongs to the AB hydrolase superfamily. Bacterial non-heme haloperoxidase / perhydrolase family.

This is Non-heme haloperoxidase (thcF) from Rhodococcus erythropolis (Arthrobacter picolinophilus).